A 204-amino-acid polypeptide reads, in one-letter code: Small ribosomal subunit protein uS4 (204 aa).

The disordered stretch occupies residues Gly21–Ser45. Positions Arg93–Val156 constitute an S4 RNA-binding domain.

Belongs to the universal ribosomal protein uS4 family. Part of the 30S ribosomal subunit. Contacts protein S5. The interaction surface between S4 and S5 is involved in control of translational fidelity.

In terms of biological role, one of the primary rRNA binding proteins, it binds directly to 16S rRNA where it nucleates assembly of the body of the 30S subunit. With S5 and S12 plays an important role in translational accuracy. This Acidiphilium cryptum (strain JF-5) protein is Small ribosomal subunit protein uS4.